The following is a 330-amino-acid chain: Aquaporin-3 (330 aa).

The Cytoplasmic portion of the chain corresponds to 1-40; sequence MSATPIIHLRDVKKRTGVLNAWERVRNKPQVHWAMECFAE. A helical membrane pass occupies residues 41–61; it reads ALGVFFYVYFGLGSTAAWVIG. Residues 62–71 are Extracellular-facing; it reads NILKQSGLSS. A helical membrane pass occupies residues 72–92; that stretch reads VFQIGFAYAFGILFAIGVCAA. The Cytoplasmic segment spans residues 93 to 124; the sequence is TSGGHFNPCVTIAFTIFRGFPPLKAVRYIVAQ. An NPA 1 motif is present at residues 99 to 101; that stretch reads NPC. The helical transmembrane segment at 125–145 threads the bilayer; it reads ILGAYIASALVYNQWKVLIVE. Residues 146–157 lie on the Extracellular side of the membrane; the sequence is SELLLKQAGVYE. A helical transmembrane segment spans residues 158–178; it reads TTMFTPNGPAGIFALYLLPGA. Residues 179-183 are Cytoplasmic-facing; the sequence is QTLPR. The helical transmembrane segment at 184–204 threads the bilayer; the sequence is AFLNEFVNCFVLALVIWAALD. At 205-207 the chain is on the extracellular side; the sequence is PTS. Residues 208–228 form a helical membrane-spanning segment; the sequence is FMIPPVMAPFIIAAAYAGSIW. Residues 229–264 lie on the Cytoplasmic side of the membrane; it reads GYAVPAISLNSARDIGCRLFALTIWGKSAAGGSYSA. The NPA 2 signature appears at 238-240; it reads NSA. Residues 265–285 traverse the membrane as a helical segment; that stretch reads IAALVNIPATLLAAVVYELFL. The Extracellular segment spans residues 286–330; it reads VDSDRVVAGSHLEFMNVAANHRRHRQQAEDDNLVEADDSSQEKPV. The interval 308–330 is disordered; that stretch reads RHRQQAEDDNLVEADDSSQEKPV. Residues 314 to 324 are compositionally biased toward acidic residues; it reads EDDNLVEADDS.

Belongs to the MIP/aquaporin (TC 1.A.8) family.

The protein resides in the cell membrane. The enzyme catalyses H2O(in) = H2O(out). The catalysed reaction is CO2(out) = CO2(in). Functionally, water channel required to facilitate the transport of water across membranes. Also mediates the transport of carbon dioxide across the membrane. This is Aquaporin-3 from Laccaria bicolor (Bicoloured deceiver).